We begin with the raw amino-acid sequence, 393 residues long: Methylthioribose kinase (393 aa).

ATP contacts are provided by residues N38, K53, and 107-109 (EDL). A substrate-binding site is contributed by D225. Residue 242–244 (DPE) participates in ATP binding. R332 contacts substrate.

Belongs to the methylthioribose kinase family. Homodimer.

It catalyses the reaction 5-(methylsulfanyl)-D-ribose + ATP = 5-(methylsulfanyl)-alpha-D-ribose 1-phosphate + ADP + H(+). Its pathway is amino-acid biosynthesis; L-methionine biosynthesis via salvage pathway; S-methyl-5-thio-alpha-D-ribose 1-phosphate from S-methyl-5'-thioadenosine (hydrolase route): step 2/2. Functionally, catalyzes the phosphorylation of methylthioribose into methylthioribose-1-phosphate. The protein is Methylthioribose kinase of Bacillus thuringiensis subsp. konkukian (strain 97-27).